The sequence spans 137 residues: Small ribosomal subunit protein uS12 (137 aa).

Residues 1–57 (MPTINQLVRKPRQSKSKKSDSPVLNRGFNSKKKQFTNLNSPQKRGVCTRVGTMTPRK) are disordered. 3-methylthioaspartic acid is present on Asp102. Residues 118–137 (SGVDGRRQGRSLYGTKKPKN) are disordered.

It belongs to the universal ribosomal protein uS12 family. Part of the 30S ribosomal subunit. Contacts proteins S8 and S17. May interact with IF1 in the 30S initiation complex.

In terms of biological role, with S4 and S5 plays an important role in translational accuracy. Interacts with and stabilizes bases of the 16S rRNA that are involved in tRNA selection in the A site and with the mRNA backbone. Located at the interface of the 30S and 50S subunits, it traverses the body of the 30S subunit contacting proteins on the other side and probably holding the rRNA structure together. The combined cluster of proteins S8, S12 and S17 appears to hold together the shoulder and platform of the 30S subunit. The protein is Small ribosomal subunit protein uS12 of Staphylococcus haemolyticus (strain JCSC1435).